Consider the following 109-residue polypeptide: Spermidine export protein MdtI (109 aa).

The next 4 helical transmembrane spans lie at Trp6–Leu26, Trp36–Val56, Ala64–Phe84, and Leu88–Leu108.

Belongs to the drug/metabolite transporter (DMT) superfamily. Small multidrug resistance (SMR) (TC 2.A.7.1) family. MdtI subfamily. In terms of assembly, forms a complex with MdtJ.

Its subcellular location is the cell inner membrane. Catalyzes the excretion of spermidine. The sequence is that of Spermidine export protein MdtI from Enterobacter sp. (strain 638).